Here is a 1107-residue protein sequence, read N- to C-terminus: OTU domain-containing protein 4 (1107 aa).

Position 1 is an N-acetylmethionine (methionine 1). The OTU domain maps to 34 to 155; sequence LYRKLVAKDG…GNHYDIVYPI (122 aa). Residues 39–45 form a cys-loop region; sequence VAKDGSC. Aspartate 42 is a catalytic residue. Cysteine 45 acts as the Nucleophile in catalysis. A variable-loop region spans residues 94–104; the sequence is LENPQEWVGQV. The residue at position 120 (tyrosine 120) is a Phosphotyrosine. Serine 126 and serine 128 each carry phosphoserine. Threonine 131 is subject to Phosphothreonine. The tract at residues 143–148 is his-loop; it reads FSNGNH. Residue histidine 148 is part of the active site. A phosphoserine mark is found at serine 166, serine 199, serine 202, and serine 204. A compositionally biased stretch (acidic residues) spans 195–206; it reads EESNSEISDSED. Disordered regions lie at residues 195 to 239 and 322 to 431; these read EESN…SADL and KHTP…DFDH. Over residues 226–236 the composition is skewed to polar residues; the sequence is GSENPKNNGNS. The residue at position 340 (serine 340) is a Phosphoserine. The segment covering 392–403 has biased composition (low complexity); that stretch reads SSHSTGSQSQKS. Over residues 419–431 the composition is skewed to basic and acidic residues; the sequence is RKPDRERAEDFDH. Phosphotyrosine is present on tyrosine 438. Residue serine 442 is modified to Phosphoserine. Tyrosine 459 is modified (phosphotyrosine). The interval 470–568 is disordered; that stretch reads PALSSSSVSQ…KPAEHIPLSN (99 aa). A compositionally biased stretch (low complexity) spans 473–486; that stretch reads SSSSVSQSPSQNSN. The span at 495 to 528 shows a compositional bias: basic and acidic residues; the sequence is HARDRKGSMRRADAEERKDKDSLRGHTHVDKKPE. Serine 544 and serine 895 each carry phosphoserine. The disordered stretch occupies residues 918–1107; the sequence is LSAASVSSKH…MGDGHRGQHT (190 aa). Basic and acidic residues predominate over residues 963–994; sequence NREREPGSAEPEPKRTIQSLKEKPEKVKDPKT. Phosphoserine is present on residues serine 1000, serine 1005, serine 1016, and serine 1017. A compositionally biased stretch (polar residues) spans 1032-1041; the sequence is SKQFYNQTYG. Serine 1042 is subject to Phosphoserine. Basic and acidic residues-rich tracts occupy residues 1060–1079 and 1089–1107; these read VRGE…EGYQ and YRGD…GQHT.

In terms of assembly, interacts with MYD88; the interaction is direct. Interacts with ALKBH3; the interaction is direct. Interacts with USP7; the interaction is direct. Interacts with USP9X; the interaction is direct. In terms of processing, phosphorylation at Ser-202 and Ser-204 activates 'Lys-63'-specific deubiquitinase activity. Induced upon stimulation with IL1B.

It is found in the cytoplasm. The protein resides in the nucleus. The enzyme catalyses Thiol-dependent hydrolysis of ester, thioester, amide, peptide and isopeptide bonds formed by the C-terminal Gly of ubiquitin (a 76-residue protein attached to proteins as an intracellular targeting signal).. Its activity is regulated as follows. Phosphorylation on Ser-202 and Ser-204 induces 'Lys-63'-specific deubiquitinase activity. In terms of biological role, deubiquitinase which hydrolyzes the isopeptide bond between the ubiquitin C-terminus and the lysine epsilon-amino group of the target protein. May negatively regulate inflammatory and pathogen recognition signaling in innate immune response. Upon phosphorylation at Ser-202 and Ser-204 residues, via IL-1 receptor and Toll-like receptor signaling pathway, specifically deubiquitinates 'Lys-63'-polyubiquitinated MYD88 adapter protein triggering down-regulation of NF-kappa-B-dependent transcription of inflammatory mediators. Independently of the catalytic activity, acts as a scaffold for alternative deubiquitinases to assemble specific deubiquitinase-substrate complexes. Associates with USP7 and USP9X deubiquitinases to stabilize alkylation repair enzyme ALKBH3, thereby promoting the repair of alkylated DNA lesions. This is OTU domain-containing protein 4 from Mus musculus (Mouse).